A 359-amino-acid chain; its full sequence is MYKNQLQELAQRSCFSLPSYTCTREGPDHAPRFKASVNFNGEIFESPTYCSTLRQAEHSAAEVALSALSSKGPSKSLTARVLDETGIYKNLLQETAHRAGLDLPVYTSVRSGPGHIPTFSCTVELAGMSFNGESAKTKKQAEKNAAIAAWFSLRKMPRLDPLRGEEKEQEIVARVLSRFRPKEVKRREPNQSRRRTVIRTIRQNTTTTTTTTGDLLCEKLRSINLYTNEASSSSPPPQRFWPSRTNLTQEQSKVKSLLEKCQEYAEKKQSLDDPKPEMRIKTSSPSPLSSSVERNCYSKLLPFPSFVLNHQKLAPAVHIRSVIPVCSAPPPKPNPNPNSSPFITRELGNGSQEKKSLPN.

DRBM domains follow at residues 1 to 70 and 87 to 155; these read MYKN…ALSS and IYKN…SLRK. Residues 266 to 280 are compositionally biased toward basic and acidic residues; the sequence is EKKQSLDDPKPEMRI. 2 disordered regions span residues 266–292 and 328–359; these read EKKQ…SSSV and APPP…SLPN. Positions 328-338 are enriched in pro residues; the sequence is APPPKPNPNPN.

Its function is as follows. Binds double-stranded RNA. The protein is Double-stranded RNA-binding protein 3 (DRB3) of Arabidopsis thaliana (Mouse-ear cress).